A 291-amino-acid chain; its full sequence is Signal peptidase I (291 aa).

Topologically, residues Met1–Ser45 are cytoplasmic. Residues Phe46–Val66 form a helical membrane-spanning segment. The Periplasmic segment spans residues Pro67–Asp291. Residues Ser70 and Lys133 contribute to the active site.

It belongs to the peptidase S26 family.

It is found in the cell inner membrane. The enzyme catalyses Cleavage of hydrophobic, N-terminal signal or leader sequences from secreted and periplasmic proteins.. This Rickettsia bellii (strain RML369-C) protein is Signal peptidase I (lepB).